The following is a 275-amino-acid chain: Succinate dehydrogenase [ubiquinone] iron-sulfur subunit, mitochondrial (275 aa).

Residues 1–24 (MFSRRIQVLSPFLKHFVNRNARMM) constitute a mitochondrion transit peptide. In terms of domain architecture, 2Fe-2S ferredoxin-type spans 57-137 (PEVKPKLQKY…PTKIYPLPHC (81 aa)). [2Fe-2S] cluster-binding residues include Cys98, Cys103, Cys106, and Cys118. One can recognise a 4Fe-4S ferredoxin-type domain in the interval 178-208 (DRAKLDGLYECILCACCSTSCPSYWWNSEEY). [4Fe-4S] cluster-binding residues include Cys188, Cys191, and Cys194. Cys198 is a [3Fe-4S] cluster binding site. Trp203 provides a ligand contact to a ubiquinone. Residues Cys245 and Cys251 each contribute to the [3Fe-4S] cluster site. A [4Fe-4S] cluster-binding site is contributed by Cys255.

The protein belongs to the succinate dehydrogenase/fumarate reductase iron-sulfur protein family. As to quaternary structure, component of complex II composed of four subunits: a flavoprotein (FP), an iron-sulfur protein (IP), and a cytochrome b composed of a large and a small subunit. It depends on [2Fe-2S] cluster as a cofactor. [3Fe-4S] cluster is required as a cofactor. The cofactor is [4Fe-4S] cluster.

It localises to the mitochondrion inner membrane. It catalyses the reaction a quinone + succinate = fumarate + a quinol. The protein operates within carbohydrate metabolism; tricarboxylic acid cycle; fumarate from succinate (eukaryal route): step 1/1. Iron-sulfur protein (IP) subunit of succinate dehydrogenase (SDH) that is involved in complex II of the mitochondrial electron transport chain and is responsible for transferring electrons from succinate to ubiquinone (coenzyme Q). The chain is Succinate dehydrogenase [ubiquinone] iron-sulfur subunit, mitochondrial (sdh2) from Schizosaccharomyces pombe (strain 972 / ATCC 24843) (Fission yeast).